The sequence spans 341 residues: tRNA N6-adenosine threonylcarbamoyltransferase (341 aa).

Fe cation contacts are provided by His-114 and His-118. Substrate-binding positions include 136-140, Asp-169, Gly-182, Asp-186, and Asn-278; that span reads LVSGG. Asp-304 is a binding site for Fe cation.

This sequence belongs to the KAE1 / TsaD family. Requires Fe(2+) as cofactor.

The protein resides in the cytoplasm. The enzyme catalyses L-threonylcarbamoyladenylate + adenosine(37) in tRNA = N(6)-L-threonylcarbamoyladenosine(37) in tRNA + AMP + H(+). Functionally, required for the formation of a threonylcarbamoyl group on adenosine at position 37 (t(6)A37) in tRNAs that read codons beginning with adenine. Is involved in the transfer of the threonylcarbamoyl moiety of threonylcarbamoyl-AMP (TC-AMP) to the N6 group of A37, together with TsaE and TsaB. TsaD likely plays a direct catalytic role in this reaction. This chain is tRNA N6-adenosine threonylcarbamoyltransferase, found in Lactococcus lactis subsp. cremoris (strain MG1363).